A 704-amino-acid chain; its full sequence is MARTTPIARYRNIGISAHIDAGKTTTTERILFYTGVNHKIGEVHDGAATMDWMEQEQERGITITSAATTAFWSGMAKQYEPHRVNIIDTPGHVDFTIEVERSMRVLDGAVMVYCAVGGVQPQSETVWRQANKYKVPRIAFVNKMDRMGANFLKVVGQIKARLGANPVPLQLAIGAEEGFTGVVDLVKMKAINWNDADQGVTFTYEDIPAEMQELADEWHQNLIESAAEASEELMEKYLGGEELTEEEIKKALRQRVLNNEVILVTCGSAFKNKGVQAMLDAVIDYLPAPTDVPAINGLLDDGKDTPAERHANDDEPFSALAFKIATDPFVGNLTFFRVYSGVVNSGDTVLNPVKSARERFGRIVQMHANKREEIKEVRAGDIAAAIGLKDVTTGDTLCDPNNVIILERMEFPEPVISIAVEPKTKADQEKMGLALGRLAKEDPSFRVWTDEESNQTIIAGMGELHLDIIVDRMKREFNVEANVGKPQVAYREAIRSKVTDIEGKHAKQSGGRGQYGHVVIDMYPLEPGSNPKGYEFVNDIKGGVIPGEYIPAVDKGIQEQLKAGPLAGYPVVDLGVRLHFGSYHDVDSSELAFKLAASIAFKDGFKKAKPVLLEPIMKVEVETPEENTGDVIGDLSRRRGMLRGQESNVTGVVIHAEVPLSEMFGYATQLRSLTKGRASYSMEFLKYDDAPNNVAQAVIEARGK.

The 283-residue stretch at 8–290 folds into the tr-type G domain; sequence ARYRNIGISA…AVIDYLPAPT (283 aa). GTP is bound by residues 17–24, 88–92, and 142–145; these read AHIDAGKT, DTPGH, and NKMD.

Belongs to the TRAFAC class translation factor GTPase superfamily. Classic translation factor GTPase family. EF-G/EF-2 subfamily.

The protein localises to the cytoplasm. In terms of biological role, catalyzes the GTP-dependent ribosomal translocation step during translation elongation. During this step, the ribosome changes from the pre-translocational (PRE) to the post-translocational (POST) state as the newly formed A-site-bound peptidyl-tRNA and P-site-bound deacylated tRNA move to the P and E sites, respectively. Catalyzes the coordinated movement of the two tRNA molecules, the mRNA and conformational changes in the ribosome. The protein is Elongation factor G of Pectobacterium atrosepticum (strain SCRI 1043 / ATCC BAA-672) (Erwinia carotovora subsp. atroseptica).